Reading from the N-terminus, the 1345-residue chain is Aldehyde oxidase 2 (1345 aa).

Positions 9-96 (DELEFFVNGK…GAAVTTVEGV (88 aa)) constitute a 2Fe-2S ferredoxin-type domain. Residues cysteine 48, cysteine 53, cysteine 56, and cysteine 78 each contribute to the [2Fe-2S] cluster site. Position 117 (glutamine 117) interacts with Mo-molybdopterin. [2Fe-2S] cluster contacts are provided by cysteine 118, cysteine 121, cysteine 153, and cysteine 155. Cysteine 155 is a binding site for Mo-molybdopterin. In terms of domain architecture, FAD-binding PCMH-type spans 238 to 423 (FYGERITWIA…GSVYIPHSQK (186 aa)). FAD-binding positions include 266 to 273 (LISGNTAL), alanine 347, serine 356, histidine 360, aspartate 369, and leucine 413. Mo-molybdopterin-binding positions include 812–813 (GF), 1094–1097 (ASVG), glutamine 1209, and leucine 1274. The active-site Proton acceptor; for azaheterocycle hydroxylase activity is the glutamate 1276.

It belongs to the xanthine dehydrogenase family. Homodimer. [2Fe-2S] cluster serves as cofactor. FAD is required as a cofactor. Requires Mo-molybdopterin as cofactor.

It is found in the cytoplasm. The catalysed reaction is an aldehyde + O2 + H2O = a carboxylate + H2O2 + H(+). Oxidase with broad substrate specificity, oxidizing aromatic azaheterocycles, such as phthalazine, as well as aldehydes, such as benzaldehyde and retinal. The chain is Aldehyde oxidase 2 (Aox2) from Rattus norvegicus (Rat).